We begin with the raw amino-acid sequence, 411 residues long: Flagellum-associated coiled-coil domain-containing protein 1 (411 aa).

Residues S52–P77 are disordered. A compositionally biased stretch (basic and acidic residues) spans P61–N74. 2 coiled-coil regions span residues S124–M220 and N278–E328. K353 bears the N6-acetyllysine mark. A coiled-coil region spans residues F355 to L385.

Its subcellular location is the cytoplasm. It localises to the cytoplasmic granule. The protein localises to the cell projection. It is found in the cilium. The protein resides in the flagellum. The polypeptide is Flagellum-associated coiled-coil domain-containing protein 1 (Rattus norvegicus (Rat)).